The primary structure comprises 56 residues: uncharacterized protein (56 aa).

This is an uncharacterized protein from Treponema pallidum (strain Nichols).